Here is a 390-residue protein sequence, read N- to C-terminus: 8-amino-7-oxononanoate synthase (390 aa).

Arg-22 is a binding site for substrate. 109-110 (GY) is a pyridoxal 5'-phosphate binding site. Position 134 (His-134) interacts with substrate. Pyridoxal 5'-phosphate contacts are provided by Ser-180, His-208, and Thr-236. Lys-239 carries the post-translational modification N6-(pyridoxal phosphate)lysine. Residue Thr-353 coordinates substrate.

Belongs to the class-II pyridoxal-phosphate-dependent aminotransferase family. BioF subfamily. As to quaternary structure, homodimer. The cofactor is pyridoxal 5'-phosphate.

The enzyme catalyses 6-carboxyhexanoyl-[ACP] + L-alanine + H(+) = (8S)-8-amino-7-oxononanoate + holo-[ACP] + CO2. Its pathway is cofactor biosynthesis; biotin biosynthesis. Catalyzes the decarboxylative condensation of pimeloyl-[acyl-carrier protein] and L-alanine to produce 8-amino-7-oxononanoate (AON), [acyl-carrier protein], and carbon dioxide. This chain is 8-amino-7-oxononanoate synthase, found in Azoarcus sp. (strain BH72).